The sequence spans 718 residues: Catalase (718 aa).

Residues histidine 103 and asparagine 176 contribute to the active site. Residue tyrosine 390 coordinates heme.

Belongs to the catalase family. It depends on heme as a cofactor.

The protein localises to the peroxisome matrix. It carries out the reaction 2 H2O2 = O2 + 2 H2O. Its function is as follows. Catalyzes the degradation of hydrogen peroxide (H(2)O(2)) generated by peroxisomal oxidases to water and oxygen, thereby protecting cells from the toxic effects of hydrogen peroxide. The chain is Catalase (CAT1) from Blumeria hordei (Barley powdery mildew).